The primary structure comprises 131 residues: Translation initiation factor 5A (131 aa).

Position 37 is a hypusine (K37).

The protein belongs to the eIF-5A family.

The protein resides in the cytoplasm. Functions by promoting the formation of the first peptide bond. In Methanococcus vannielii (strain ATCC 35089 / DSM 1224 / JCM 13029 / OCM 148 / SB), this protein is Translation initiation factor 5A (eIF5A).